Consider the following 715-residue polypeptide: Polyribonucleotide nucleotidyltransferase (715 aa).

Aspartate 493 and aspartate 499 together coordinate Mg(2+). The 60-residue stretch at 560–619 folds into the KH domain; that stretch reads PRMITIKINPEKIRDVIGKGGSVIRALTEETGTTIDISDDGVVTIASTSSEGMAEAKKRI. The S1 motif domain maps to 629 to 697; the sequence is GQVYEGTVLK…EKGRVRLSAK (69 aa).

This sequence belongs to the polyribonucleotide nucleotidyltransferase family. Requires Mg(2+) as cofactor.

Its subcellular location is the cytoplasm. It catalyses the reaction RNA(n+1) + phosphate = RNA(n) + a ribonucleoside 5'-diphosphate. Functionally, involved in mRNA degradation. Catalyzes the phosphorolysis of single-stranded polyribonucleotides processively in the 3'- to 5'-direction. The polypeptide is Polyribonucleotide nucleotidyltransferase (Burkholderia vietnamiensis (strain G4 / LMG 22486) (Burkholderia cepacia (strain R1808))).